A 679-amino-acid chain; its full sequence is Stress-70 protein, mitochondrial (679 aa).

Residues 1 to 46 (MISASRAAAARLVGTTASRSPAAARHQDGWNGLSHEAFRFVSRRDY) constitute a mitochondrion transit peptide. Residues 1–432 (MISASRAAAA…IQGGVLAGDV (432 aa)) form an interaction with NFS1 region. ADP is bound by residues threonine 63 and asparagine 64. The tract at residues 63 to 431 (TNSCVAVMEG…AIQGGVLAGD (369 aa)) is nucleotide-binding domain (NBD). An N6-acetyllysine modification is found at lysine 76. Threonine 87 is modified (phosphothreonine). 2 positions are modified to N6-acetyllysine; alternate: lysine 135 and lysine 138. 2 positions are modified to N6-succinyllysine; alternate: lysine 135 and lysine 138. Position 143 is an N6-acetyllysine (lysine 143). Lysine 206 is modified (N6-acetyllysine; alternate). An N6-succinyllysine; alternate modification is found at lysine 206. Lysine 206 bears the N6-malonyllysine; alternate mark. Lysine 234 and lysine 288 each carry N6-acetyllysine. Position 300 is an N6-acetyllysine; alternate (lysine 300). An N6-succinyllysine; alternate modification is found at lysine 300. 3 residues coordinate ADP: glutamate 313, lysine 316, and serine 320. N6-acetyllysine; alternate is present on lysine 360. N6-succinyllysine; alternate is present on lysine 360. The residue at position 368 (lysine 368) is an N6-succinyllysine. 2 residues coordinate ADP: glycine 388 and arginine 391. Residue lysine 394 is modified to N6-succinyllysine. Serine 408 is modified (phosphoserine). The interval 432–441 (VTDVLLLDVT) is interdomain linker. The interval 432-679 (VTDVLLLDVT…QKEDQKEEKQ (248 aa)) is interaction with FXN and ISCU. The interval 442–679 (PLSLGIETLG…QKEDQKEEKQ (238 aa)) is substrate-binding domain (SBD). Omega-N-methylarginine is present on arginine 513. 2 positions are modified to N6-acetyllysine; alternate: lysine 567 and lysine 600. An N6-succinyllysine; alternate mark is found at lysine 567 and lysine 600. Lysine 610 carries the N6-succinyllysine modification. Position 612 is an N6-acetyllysine (lysine 612). N6-acetyllysine; alternate is present on lysine 646. Lysine 646 is modified (N6-succinyllysine; alternate). A disordered region spans residues 655–679 (MASEREGSGSSSTGEQKEDQKEEKQ). Residues 669-679 (EQKEDQKEEKQ) show a composition bias toward basic and acidic residues.

It belongs to the heat shock protein 70 family. As to quaternary structure, interacts strongly with the intermediate form of FXN and weakly with its mature form. Interacts with HSCB. Associates with the mitochondrial contact site and cristae organizing system (MICOS) complex, composed of at least MICOS10/MIC10, CHCHD3/MIC19, CHCHD6/MIC25, APOOL/MIC27, IMMT/MIC60, APOO/MIC23/MIC26 and QIL1/MIC13. This complex was also known under the names MINOS or MitOS complex. The MICOS complex associates with mitochondrial outer membrane proteins SAMM50, MTX1, MTX2 and DNAJC11, mitochondrial inner membrane protein TMEM11 and with HSPA9. Interacts with DNLZ, the interaction is required to prevent self-aggregation. Interacts with TESPA1. Interacts with PDPN. Interacts with NFU1, NFS1 and ISCU. Interacts with TP53; the interaction promotes TP53 degradation. Interacts (via SBD domain) with UBXN2A; the interaction with UBXN2A inhibits HSPA9 interaction with and degradation of TP53, thereby promotes TP53 translocation to the nucleus. Interacts with ITPR1 AND VDAC1; this interaction couples ITPR1 to VDAC1. Component of the TIM23 mitochondrial inner membrane pre-sequence translocase complex.

The protein localises to the mitochondrion. It is found in the nucleus. The protein resides in the nucleolus. It localises to the cytoplasm. Its subcellular location is the mitochondrion matrix. It catalyses the reaction ATP + H2O = ADP + phosphate + H(+). The chaperone activity is regulated by ATP-induced allosteric coupling of the nucleotide-binding (NBD) and substrate-binding (SBD) domains. ATP binding in the nucleotide-binding pocket (NBP) leads to a conformational change in the NBD, which is transferred through the interdomain linker (IDL) to the substrate-binding domain (SBD). This elicits a reduced substrate affinity and a faster substrate exchange rate. Upon hydrolysis of ATP to ADP, the protein undergoes a conformational change that increases its affinity for substrate proteins. It cycles through repeated phases of ATP hydrolysis and nucleotide exchange, facilitating repeated cycles of substrate binding and release. Functions in collaboration with co-chaperones. Functions with the co-chaperone, DNLZ, to maintain solubility and regulate ATP hydrolysis. Nucleotide exchange factors, GRPEL1 and GRPEL2, accelerate nucleotide exchange. Its function is as follows. Mitochondrial chaperone that plays a key role in mitochondrial protein import, folding, and assembly. Plays an essential role in the protein quality control system, the correct folding of proteins, the re-folding of misfolded proteins, and the targeting of proteins for subsequent degradation. These processes are achieved through cycles of ATP binding, ATP hydrolysis, and ADP release, mediated by co-chaperones. In mitochondria, it associates with the TIM (translocase of the inner membrane) protein complex to assist in the import and folding of mitochondrial proteins. Plays an important role in mitochondrial iron-sulfur cluster (ISC) biogenesis, interacts with and stabilizes ISC cluster assembly proteins FXN, NFU1, NFS1 and ISCU. Regulates erythropoiesis via stabilization of ISC assembly. Regulates mitochondrial calcium-dependent apoptosis by coupling two calcium channels, ITPR1 and VDAC1, at the mitochondria-associated endoplasmic reticulum (ER) membrane to facilitate calcium transport from the ER lumen to the mitochondria intermembrane space, providing calcium for the downstream calcium channel MCU, which releases it into the mitochondrial matrix. Although primarily located in the mitochondria, it is also found in other cellular compartments. In the cytosol, it associates with proteins involved in signaling, apoptosis, or senescence. It may play a role in cell cycle regulation via its interaction with and promotion of degradation of TP53. May play a role in the control of cell proliferation and cellular aging. Protects against reactive oxygen species (ROS). Extracellular HSPA9 plays a cytoprotective role by preventing cell lysis following immune attack by the membrane attack complex by disrupting formation of the complex. This chain is Stress-70 protein, mitochondrial, found in Rattus norvegicus (Rat).